We begin with the raw amino-acid sequence, 311 residues long: Beta-lactamase (311 aa).

A signal peptide (tat-type signal) is located at residues 1 to 34 (MRLTQAPPSRRTLMTLGAGATMAALLPAGGAAYA). Ser87 functions as the Acyl-ester intermediate in the catalytic mechanism. Substrate is bound at residue 255-257 (KTG).

It belongs to the class-A beta-lactamase family. Post-translationally, predicted to be exported by the Tat system. The position of the signal peptide cleavage has not been experimentally proven.

It catalyses the reaction a beta-lactam + H2O = a substituted beta-amino acid. The protein is Beta-lactamase (bla) of Kitasatospora aureofaciens (Streptomyces aureofaciens).